A 49-amino-acid chain; its full sequence is Large ribosomal subunit protein eL40 (49 aa).

The protein belongs to the eukaryotic ribosomal protein eL40 family.

In Methanococcoides burtonii (strain DSM 6242 / NBRC 107633 / OCM 468 / ACE-M), this protein is Large ribosomal subunit protein eL40.